The primary structure comprises 225 residues: Endoglucanase (225 aa).

An N-terminal signal peptide occupies residues 1–15; that stretch reads MKVFVVLAAIVAIAN. Asp29 serves as the catalytic Nucleophile. 7 disulfide bridges follow: Cys30–Cys152, Cys31–Cys66, Cys35–Cys103, Cys50–Cys74, Cys104–Cys219, Cys106–Cys209, and Cys176–Cys187. Asn55 carries an N-linked (GlcNAc...) asparagine glycan. Residue Asp138 is the Proton donor of the active site.

This sequence belongs to the glycosyl hydrolase 45 (cellulase K) family. In terms of processing, N- and O-glycosylated. Contains hybrid- and complex-type N-glycans.

The protein resides in the secreted. It carries out the reaction Endohydrolysis of (1-&gt;4)-beta-D-glucosidic linkages in cellulose, lichenin and cereal beta-D-glucans.. Its activity is regulated as follows. Activity is not affected by metal ions except Mn(2+), which reduces the activity by 40-50%. However, no significant change in activity in response to 1 mM EDTA. Hydrolyzes carboxymethylcellulose (CMC). Also hydrolyzes lichenan and barley beta-1,4-D-glucan. CMC is hydrolyzed majorily to cellobiose (G2), cellotriose (G3) and cellotetraose (G4). Cellohexaose (G6) is hydrolyzed to G4 and G2 with traces of G3. Cellopentaose (G5) is completely hydrolyzed to G2 and G3, and G4 is partially hydrolyzed to G2. Does not hydrolyze G2 or G3. Does not hydrolyze crystalline cellulose, soluble starch, xylan, mannan or laminarin. This chain is Endoglucanase, found in Cryptopygus antarcticus (Antarctic springtail).